Consider the following 659-residue polypeptide: Cyclic-di-AMP phosphodiesterase GdpP (659 aa).

Over 1 to 8 the chain is Cytoplasmic; it reads MPSFYEKP. Transmembrane regions (helical) follow at residues 9 to 29 and 30 to 50; these read LFRY…LISF and YFNW…LFFI. At 51 to 659 the chain is on the cytoplasmic side; the sequence is KRADSLIRQE…DEYFEGGVQR (609 aa). The segment at 84–149 is PAS-like domain, required for heme-binding; that stretch reads PIGIMLFNDQ…NDRKFRVVIK (66 aa). Positions 173-301 constitute a GGDEF domain; the sequence is ERTVLAYIFL…GGDQVAIKLP (129 aa). The interval 339–496 is DHH domain; it reads NVIIMGHKFP…IEATALLAGI (158 aa). Mn(2+) is bound by residues His345, Asp349, Asp351, Asp420, His444, and Asp499. The tract at residues 591–646 is DHHA1 domain; sequence FAVARRDEQTVCISARSLGEVNVQIIMEALEGGGHLTNAATQLSGISVSEALERLK.

It belongs to the GdpP/PdeA phosphodiesterase family. Heme b serves as cofactor. Requires Mg(2+) as cofactor. It depends on Mn(2+) as a cofactor.

It localises to the cell membrane. It catalyses the reaction 3',3'-c-di-AMP + H2O = 5'-O-phosphonoadenylyl-(3'-&gt;5')-adenosine + H(+). Its activity is regulated as follows. Phosphodiesterase (PDE) inhibited by Zn(2+), Ca(2+) inhibits in the presence of Mg(2+) but not Mn(2+); c-di-AMP PDE activity is competitively inhibited by ppGpp. Heme binding (by Fe(2+) or Fe(3+) heme) inhibits PDE, activity is partially restored by KCN or NO only for Fe(2+) heme. Binding of NO to Fe(2+) heme switches from hexa- to pentacoordination. Heme binding inhibits the ATPase activity. Has phosphodiesterase (PDE) activity against cyclic-di-AMP (c-di-AMP) and to a much lesser extent against cyclic-di-GMP (c-di-GMP) in the DHH/DHHA1 domains. Also has ATPase activity, probably via the GGDEF domain. Overexpression leads to increased sensitivity to methyl methanesulfonate (MMS) and H(2)O(2). Overexpression leads to extreme sensitivity to the beta-lactam antibiotic cefuroxime (CEF), probably dependent on PDE activity. May monitor cellular heme or NO levels. In B.subtilis c-di-AMP is a second messenger that mediates growth, DNA repair and cell wall homeostasis; it is toxic when present in excess. The chain is Cyclic-di-AMP phosphodiesterase GdpP from Bacillus subtilis (strain 168).